The primary structure comprises 340 residues: GTP-binding protein REM 2 (340 aa).

A compositionally biased stretch (acidic residues) spans 1 to 13 (MHTDLDTDMDMDT). The tract at residues 1-107 (MHTDLDTDMD…SDSLGSGEAA (107 aa)) is disordered. Ser-27 is modified (phosphoserine). Over residues 40–53 (LLKKSEKLLAELDR) the composition is skewed to basic and acidic residues. Positions 93–104 (SSSGSSDSLGSG) are enriched in low complexity. GTP contacts are provided by residues 121 to 128 (GESGVGKS), 229 to 232 (NKSD), and 260 to 261 (AA). The disordered stretch occupies residues 283–308 (RNHAGGQRPDPGSPEGPAPPARRESL). Over residues 293-302 (PGSPEGPAPP) the composition is skewed to pro residues. Ser-295 carries the phosphoserine modification.

Belongs to the small GTPase superfamily. RGK family.

It localises to the cell membrane. Functionally, binds GTP saturably and exhibits a low intrinsic rate of GTP hydrolysis. This is GTP-binding protein REM 2 (REM2) from Homo sapiens (Human).